The sequence spans 333 residues: Nucleoid-associated protein VC0395_A1624/VC395_2154 (333 aa).

The protein belongs to the YejK family.

It localises to the cytoplasm. The protein resides in the nucleoid. The protein is Nucleoid-associated protein VC0395_A1624/VC395_2154 of Vibrio cholerae serotype O1 (strain ATCC 39541 / Classical Ogawa 395 / O395).